A 418-amino-acid chain; its full sequence is Protein fuzzy homolog (418 aa).

It belongs to the fuzzy family. In terms of assembly, component of the CPLANE (ciliogenesis and planar polarity effectors) complex, composed of INTU, FUZ and WDPCP. Interacts with CPLANE2. Interacts with CPLANE1.

Its subcellular location is the cytoplasm. It localises to the cytoskeleton. The protein localises to the cilium basal body. In terms of biological role, probable planar cell polarity effector involved in cilium biogenesis. May regulate protein and membrane transport to the cilium. Proposed to function as core component of the CPLANE (ciliogenesis and planar polarity effectors) complex involved in the recruitment of peripheral IFT-A proteins to basal bodies. May regulate the morphogenesis of hair follicles which depends on functional primary cilia. Binds phosphatidylinositol 3-phosphate with highest affinity, followed by phosphatidylinositol 4-phosphate and phosphatidylinositol 5-phosphate. This is Protein fuzzy homolog (FUZ) from Homo sapiens (Human).